The primary structure comprises 81 residues: Sulfur carrier protein TusA (81 aa).

Cysteine 19 (cysteine persulfide intermediate) is an active-site residue.

This sequence belongs to the sulfur carrier protein TusA family.

It localises to the cytoplasm. Functionally, sulfur carrier protein which probably makes part of a sulfur-relay system. The protein is Sulfur carrier protein TusA of Shewanella oneidensis (strain ATCC 700550 / JCM 31522 / CIP 106686 / LMG 19005 / NCIMB 14063 / MR-1).